A 202-amino-acid chain; its full sequence is FMN-dependent NADH:quinone oxidoreductase (202 aa).

FMN contacts are provided by residues Ser12 and 21–23 (SFS).

It belongs to the azoreductase type 1 family. In terms of assembly, homodimer. It depends on FMN as a cofactor.

The catalysed reaction is 2 a quinone + NADH + H(+) = 2 a 1,4-benzosemiquinone + NAD(+). It carries out the reaction N,N-dimethyl-1,4-phenylenediamine + anthranilate + 2 NAD(+) = 2-(4-dimethylaminophenyl)diazenylbenzoate + 2 NADH + 2 H(+). In terms of biological role, quinone reductase that provides resistance to thiol-specific stress caused by electrophilic quinones. Also exhibits azoreductase activity. Catalyzes the reductive cleavage of the azo bond in aromatic azo compounds to the corresponding amines. The protein is FMN-dependent NADH:quinone oxidoreductase of Mycoplasma mobile (strain ATCC 43663 / 163K / NCTC 11711) (Mesomycoplasma mobile).